The chain runs to 100 residues: Urease subunit gamma (100 aa).

The protein belongs to the urease gamma subunit family. As to quaternary structure, heterotrimer of UreA (gamma), UreB (beta) and UreC (alpha) subunits. Three heterotrimers associate to form the active enzyme.

It is found in the cytoplasm. The catalysed reaction is urea + 2 H2O + H(+) = hydrogencarbonate + 2 NH4(+). Its pathway is nitrogen metabolism; urea degradation; CO(2) and NH(3) from urea (urease route): step 1/1. In Prochlorococcus marinus (strain MIT 9313), this protein is Urease subunit gamma.